Here is a 429-residue protein sequence, read N- to C-terminus: Transcription factor IIIA (429 aa).

A disordered region spans residues 1 to 45 (MGGEVLNNEGMPLAELKQETIPISRSESSESLNSLTSTRSSSSNR). Residues 24 to 44 (SRSESSESLNSLTSTRSSSSN) are compositionally biased toward low complexity. C2H2-type zinc fingers lie at residues 49–74 (YFCDYDGCDKAFTRPSILTEHQLSVH), 80–102 (FQCDKCAKSFVKKSHLERHLYTH), 108–130 (FQCSYCGKGVTTRQQLKRHEVTH), 134–159 (FICPEEGCNLRFYKHPQLRAHILSVH), 163–186 (LTCPHCNKSFQRPYRLRNHISKHH), 194–219 (YQCTFAGCCKEFRIWSQLQSHIKNDH), 222–244 (LKCPICSKPCVGENGLQMHMIIH), 253–277 (WKCHICPDMSFSRKHDLLTHYGSIH), and 365–389 (YRCFYNNCSRTFKTKEKYEKHIDKH). Over residues 406 to 416 (KTLVDQNHKEP) the composition is skewed to basic and acidic residues. The interval 406–429 (KTLVDQNHKEPFIIQKETQSAGDK) is disordered.

Its subcellular location is the nucleus. Its function is as follows. Interacts with the internal control region (ICR) of approximately 50 bases within the 5S RNA genes, is required for correct transcription of these genes by RNA polymerase III. Also binds the transcribed 5S RNA's. The chain is Transcription factor IIIA (PZF1) from Saccharomyces cerevisiae (strain ATCC 204508 / S288c) (Baker's yeast).